We begin with the raw amino-acid sequence, 260 residues long: UPF0246 protein BPSL1241 (260 aa).

It belongs to the UPF0246 family.

The polypeptide is UPF0246 protein BPSL1241 (Burkholderia pseudomallei (strain K96243)).